Reading from the N-terminus, the 645-residue chain is ATP-dependent zinc metalloprotease FtsH (645 aa).

Residues 1-8 lie on the Cytoplasmic side of the membrane; that stretch reads MDFNREHK. Residues 9–29 traverse the membrane as a helical segment; sequence INFLYVLAAMVGVLLIQSLVS. The Periplasmic segment spans residues 30–105; sequence QPDHIRTIPY…FSGEPEPGPW (76 aa). The chain crosses the membrane as a helical span at residues 106–126; sequence PTILGWLMPIVGFALVWMFLI. Topologically, residues 127–645 are cytoplasmic; it reads RPMSMGPGMD…ALTVEGGEAQ (519 aa). 199–206 contributes to the ATP binding site; that stretch reads GPPGTGKT. His-423 contributes to the Zn(2+) binding site. Residue Glu-424 is part of the active site. His-427 and Asp-500 together coordinate Zn(2+). A disordered region spans residues 612 to 645; that stretch reads SASVLRDGGDGAADAGQDRSGEHRALTVEGGEAQ. Positions 627–637 are enriched in basic and acidic residues; it reads GQDRSGEHRAL.

It in the central section; belongs to the AAA ATPase family. This sequence in the C-terminal section; belongs to the peptidase M41 family. As to quaternary structure, homohexamer. Requires Zn(2+) as cofactor.

The protein resides in the cell inner membrane. Its function is as follows. Acts as a processive, ATP-dependent zinc metallopeptidase for both cytoplasmic and membrane proteins. Plays a role in the quality control of integral membrane proteins. The chain is ATP-dependent zinc metalloprotease FtsH from Paraburkholderia phymatum (strain DSM 17167 / CIP 108236 / LMG 21445 / STM815) (Burkholderia phymatum).